The following is a 150-amino-acid chain: Large ribosomal subunit protein bL9 (150 aa).

This sequence belongs to the bacterial ribosomal protein bL9 family.

Binds to the 23S rRNA. This chain is Large ribosomal subunit protein bL9, found in Delftia acidovorans (strain DSM 14801 / SPH-1).